We begin with the raw amino-acid sequence, 373 residues long: Dual-specificity RNA methyltransferase RlmN (373 aa).

E94 serves as the catalytic Proton acceptor. Residues E100–D339 form the Radical SAM core domain. The cysteines at positions 107 and 344 are disulfide-linked. C114, C118, and C121 together coordinate [4Fe-4S] cluster. S-adenosyl-L-methionine is bound by residues G168–E169, S200, S222–H224, and N301. C344 serves as the catalytic S-methylcysteine intermediate.

The protein belongs to the radical SAM superfamily. RlmN family. [4Fe-4S] cluster serves as cofactor.

The protein localises to the cytoplasm. The catalysed reaction is adenosine(2503) in 23S rRNA + 2 reduced [2Fe-2S]-[ferredoxin] + 2 S-adenosyl-L-methionine = 2-methyladenosine(2503) in 23S rRNA + 5'-deoxyadenosine + L-methionine + 2 oxidized [2Fe-2S]-[ferredoxin] + S-adenosyl-L-homocysteine. It catalyses the reaction adenosine(37) in tRNA + 2 reduced [2Fe-2S]-[ferredoxin] + 2 S-adenosyl-L-methionine = 2-methyladenosine(37) in tRNA + 5'-deoxyadenosine + L-methionine + 2 oxidized [2Fe-2S]-[ferredoxin] + S-adenosyl-L-homocysteine. In terms of biological role, specifically methylates position 2 of adenine 2503 in 23S rRNA and position 2 of adenine 37 in tRNAs. m2A2503 modification seems to play a crucial role in the proofreading step occurring at the peptidyl transferase center and thus would serve to optimize ribosomal fidelity. The sequence is that of Dual-specificity RNA methyltransferase RlmN from Shewanella oneidensis (strain ATCC 700550 / JCM 31522 / CIP 106686 / LMG 19005 / NCIMB 14063 / MR-1).